Reading from the N-terminus, the 271-residue chain is Indole-3-glycerol phosphate synthase (271 aa).

It belongs to the TrpC family.

It carries out the reaction 1-(2-carboxyphenylamino)-1-deoxy-D-ribulose 5-phosphate + H(+) = (1S,2R)-1-C-(indol-3-yl)glycerol 3-phosphate + CO2 + H2O. It participates in amino-acid biosynthesis; L-tryptophan biosynthesis; L-tryptophan from chorismate: step 4/5. The sequence is that of Indole-3-glycerol phosphate synthase from Lachnoclostridium phytofermentans (strain ATCC 700394 / DSM 18823 / ISDg) (Clostridium phytofermentans).